A 102-amino-acid chain; its full sequence is Methane monooxygenase component D (102 aa).

In terms of assembly, the soluble methane monooxygenase (sMMO) consists of four components A/MMOH (composed of alpha/MmoX, beta/MmoY and gamma/MmoZ), B/MMOB (MmoB), C/MMOR (MmoC) and D/MMOD (MmoD).

This Methylosinus trichosporium protein is Methane monooxygenase component D (mmoD).